We begin with the raw amino-acid sequence, 381 residues long: Creatine kinase B-type (381 aa).

At Ser-4 the chain carries Phosphoserine. In terms of domain architecture, Phosphagen kinase N-terminal spans 11-98; sequence KLRFPAEDEF…FDPIIEDRHG (88 aa). Thr-35 bears the Phosphothreonine mark. A Glycyl lysine isopeptide (Lys-Gly) (interchain with G-Cter in ubiquitin) cross-link involves residue Lys-45. Val-72 lines the creatine pocket. The segment covering 96–110 has biased composition (basic and acidic residues); sequence RHGGYQPSDEHKTDL. Residues 96–122 are disordered; sequence RHGGYQPSDEHKTDLNPDNLQGGDDLD. Residue Lys-107 forms a Glycyl lysine isopeptide (Lys-Gly) (interchain with G-Cter in ubiquitin) linkage. At Tyr-125 the chain carries Phosphotyrosine. Residues 125–367 enclose the Phosphagen kinase C-terminal domain; that stretch reads YVLSSRVRTG…KLLIEMEQRL (243 aa). Residues 128–132, Arg-130, Arg-132, and His-191 each bind ATP; that span reads SSRVR. The internal MTS-like signal stretch occupies residues 130–138; the sequence is RVRTGRSIR. Ser-199 bears the Phosphoserine mark. Glu-232 lines the creatine pocket. An ATP-binding site is contributed by Arg-236. Residue Tyr-269 is modified to 3'-nitrotyrosine. Residue Ser-285 participates in creatine binding. Residue Arg-292 coordinates ATP. A Phosphoserine modification is found at Ser-309. ATP is bound by residues Arg-320, 320 to 325, and Asp-335; that span reads RGTGGV. Thr-322 is subject to Phosphothreonine. Residue Lys-381 forms a Glycyl lysine isopeptide (Lys-Gly) (interchain with G-Cter in ubiquitin) linkage.

This sequence belongs to the ATP:guanido phosphotransferase family. Dimer of identical or non-identical chains, which can be either B (brain type) or M (muscle type). With MM being the major form in skeletal muscle and myocardium, MB existing in myocardium, and BB existing in many tissues, especially brain. Interacts with SLC12A6 (via C-terminus); the interaction may be required for SLC12A6 potassium-chloride cotransport activity. Ubiquitinated by the ECS(ASB9) complex, leading to its degradation by the proteasome. As to expression, in the kidney localized primarily in the outer medulla in the thick ascending limb and distal convoluted tubule.

It is found in the cytoplasm. The protein resides in the cytosol. It localises to the mitochondrion. The protein localises to the cell membrane. The enzyme catalyses creatine + ATP = N-phosphocreatine + ADP + H(+). Functionally, reversibly catalyzes the transfer of phosphate between ATP and various phosphogens (e.g. creatine phosphate). Creatine kinase isoenzymes play a central role in energy transduction in tissues with large, fluctuating energy demands, such as skeletal muscle, heart, brain and spermatozoa. Acts as a key regulator of adaptive thermogenesis as part of the futile creatine cycle: localizes to the mitochondria of thermogenic fat cells and acts by mediating phosphorylation of creatine to initiate a futile cycle of creatine phosphorylation and dephosphorylation. During the futile creatine cycle, creatine and N-phosphocreatine are in a futile cycle, which dissipates the high energy charge of N-phosphocreatine as heat without performing any mechanical or chemical work. In Rattus norvegicus (Rat), this protein is Creatine kinase B-type (Ckb).